We begin with the raw amino-acid sequence, 548 residues long: 1,3-beta-glucanosyltransferase gel4 (548 aa).

The first 25 residues, 1-25, serve as a signal peptide directing secretion; the sequence is MKFVYAAAGASLVGSALATLPVIEA. N-linked (GlcNAc...) asparagine glycans are attached at residues asparagine 51 and asparagine 69. Cysteine 88 and cysteine 117 are disulfide-bonded. Residues tyrosine 106, 133 to 141, asparagine 174, and glutamate 175 each bind (1,3-beta-D-glucosyl)n; that span reads SAPSESINR. Glutamate 175 functions as the Proton donor in the catalytic mechanism. The N-linked (GlcNAc...) asparagine glycan is linked to asparagine 181. Residues aspartate 217 and arginine 222 each coordinate (1,3-beta-D-glucosyl)n. 5 cysteine pairs are disulfide-bonded: cysteine 231–cysteine 364, cysteine 249–cysteine 280, cysteine 386–cysteine 437, cysteine 395–cysteine 461, and cysteine 414–cysteine 419. Glutamate 277 (nucleophile) is an active-site residue. (1,3-beta-D-glucosyl)n is bound at residue tyrosine 309. Asparagine 425 carries N-linked (GlcNAc...) asparagine glycosylation. Alanine 519 carries the GPI-like-anchor amidated alanine lipid modification. The propeptide at 520–548 is removed in mature form; the sequence is SPMAVKVGNWQFGAYIATALFAGVGMLVL.

This sequence belongs to the glycosyl hydrolase 72 family. The GPI-like anchor contains a phosphoceramide lipid group.

Its subcellular location is the cell membrane. In terms of biological role, splits internally a 1,3-beta-glucan molecule and transfers the newly generated reducing end (the donor) to the non-reducing end of another 1,3-beta-glucan molecule (the acceptor) forming a 1,3-beta linkage, resulting in the elongation of 1,3-beta-glucan chains in the cell wall. Involved in cell wall morphogenesis. The sequence is that of 1,3-beta-glucanosyltransferase gel4 (gel4) from Aspergillus fumigatus (strain ATCC MYA-4609 / CBS 101355 / FGSC A1100 / Af293) (Neosartorya fumigata).